The chain runs to 712 residues: MFDIKRKTIEWGGKTLVLETGRIARQADGAVLATMGETVVLATAVFAKSQKPGQDFFPLTVNYQEKTFAAGKIPGGFFKREGRPSEKETLVSRLIDRPIRPLFVKGFKNEVQVVVTVLQHDLENDPDILGMVAASAALCLSGAPFMGPIGAARVGWVDGAYVLNPTLDEMKESKMDLVVAGTADAVMMVESEIQELSEEIVLGGVNFAHQQMQAVIDAIIDLAEHAAKEPFAFEPEDTDAIKAKMKDLVGADIAAAYKIQKKQDRYEAVGAAKKKAIAALGLSDENPTGYDPLKLGAIFKELEADVVRRGILDTGLRIDGRDVKTVRPILGEVGILPRTHGSALFTRGETQAIVVATLGTGDDEQFIDALEGTYKESFLLHYNFPPYSVGETGRMGSPGRREIGHGKLAWRALRPMLPTKEDFPYTIRLVSEITESNGSSSMATVCGSSLAMMDAGVPLVRPVSGIAMGLILEQDGFAVLSDILGDEDHLGDMDFKVAGTSEGLTSLQMDIKIAGITPAIMEQALAQAKEGRAHILGEMNKAMDAPRADVGDFAPKIETINIPTDKIREVIGSGGKVIREIVATTGAKVDINDDGVVKVSASDGAKIKAAIDWIKSITDEAEVGKIYDGKVVKVVDFGAFVNFFGAKDGLVHVSQISNERVAKPSDVLKEGQMVKVKLLGFDDRGKTKLSMKVVDQETGEDLSKKEAAAEEA.

Mg(2+)-binding residues include D488 and D494. In terms of domain architecture, KH spans 555–614 (PKIETINIPTDKIREVIGSGGKVIREIVATTGAKVDINDDGVVKVSASDGAKIKAAIDWI). Residues 624–692 (GKIYDGKVVK…DRGKTKLSMK (69 aa)) enclose the S1 motif domain.

The protein belongs to the polyribonucleotide nucleotidyltransferase family. It depends on Mg(2+) as a cofactor.

Its subcellular location is the cytoplasm. The catalysed reaction is RNA(n+1) + phosphate = RNA(n) + a ribonucleoside 5'-diphosphate. In terms of biological role, involved in mRNA degradation. Catalyzes the phosphorolysis of single-stranded polyribonucleotides processively in the 3'- to 5'-direction. This chain is Polyribonucleotide nucleotidyltransferase, found in Caulobacter vibrioides (strain NA1000 / CB15N) (Caulobacter crescentus).